Reading from the N-terminus, the 870-residue chain is MGNRGMEELIPLVNKLQDAFSSIGQSCHLDLPQIAVVGGQSAGKSSVLENFVGRDFLPRGSGIVTRRPLILQLIFSKTEHAEFLHCKSKKFTDFDEVRQEIEAETDRVTGTNKGISPVPINLRVYSPHVLNLTLIDLPGITKVPVGDQPPDIEYQIKDMILQFISRESSLILAVTPANMDLANSDALKLAKEVDPQGLRTIGVITKLDLMDEGTDARDVLENKLLPLRRGYIGVVNRSQKDIEGKKDIRAALAAERKFFLSHPAYRHMADRMGTPHLQKTLNQQLTNHIRESLPALRSKLQSQLLSLEKEVEEYKNFRPDDPTRKTKALLQMVQQFGVDFEKRIEGSGDQVDTLELSGGARINRIFHERFPFELVKMEFDEKDLRREISYAIKNIHGVRTGLFTPDLAFEAIVKKQVVKLKEPCLKCVDLVIQELINTVRQCTSKLSSYPRLREETERIVTTYIREREGRTKDQILLLIDIEQSYINTNHEDFIGFANAQQRSTQLNKKRAIPNQGEILVIRRGWLTINNISLMKGGSKEYWFVLTAESLSWYKDEEEKEKKYMLPLDNLKIRDVEKGFMSNKHVFAIFNTEQRNVYKDLRQIELACDSQEDVDSWKASFLRAGVYPEKDQAENEDGAQENTFSMDPQLERQVETIRNLVDSYVAIINKSIRDLMPKTIMHLMINNTKAFIHHELLAYLYSSADQSSLMEESADQAQRRDDMLRMYHALKEALNIIGDISTSTVSTPVPPPVDDTWLQSASSHSPTPQRRPVSSIHPPGRPPAVRGPTPGPPLIPVPVGAAASFSAPPIPSRPGPQSVFANSDLFPAPPQIPSRPVRIPPGIPPGVPSRRPPAAPSRPTIIRPAEPSLLD.

One can recognise a Dynamin-type G domain in the interval H28–P294. The tract at residues G38–S45 is G1 motif. Positions 41, 43, 44, 45, 46, 59, and 60 each coordinate GDP. The segment at V64–R66 is G2 motif. Positions D136–G139 are G3 motif. The G4 motif stretch occupies residues T205–D208. Positions 206, 208, and 211 each coordinate GDP. The residue at position 231 (Y231) is a Phosphotyrosine; by SRC. The interval V235–S238 is G5 motif. 3 residues coordinate GDP: N236, R237, and Q239. Position 299 is an N6-acetyllysine (K299). A PH domain is found at L519 to V625. Y597 is modified (phosphotyrosine; by SRC). K598 is modified (N6-acetyllysine). The 92-residue stretch at V653–V744 folds into the GED domain. The tract at residues T741–D870 is disordered. T755 bears the Phosphothreonine mark. Over residues W756 to P767 the composition is skewed to polar residues. Residue S764 is modified to Phosphoserine; by CDK1. A compositionally biased stretch (low complexity) spans V796–A806. Residues P826–P855 show a composition bias toward pro residues. The residue at position 848 (S848) is a Phosphoserine; by GSK3-alpha.

It belongs to the TRAFAC class dynamin-like GTPase superfamily. Dynamin/Fzo/YdjA family. In terms of assembly, oligomerizes into a helical polymer that self-assembles around the vesicle membrane, when associated to the menbrane through lipid binding. Interacts with SHANK1 and SHANK2. Interacts with SNX9. Interacts (via C-terminal proline-rich domain (PRD)) with SNX18 (via SH3 domain); this interaction regulates ATG9A and ATG16L1 trafficking from recycling endosomes to sites of autophagosome formation. Interacts with SNX33 (via SH3 domain). Interacts with MYO1E (via SH3 domain). Interacts with PSTPIP1 (via SH3 domain). Interacts with CTNND2. Interacts (via C-terminal proline-rich domain (PRD)) with BIN1 (via SH3 domain); this interaction allows the recruitment of DNM2 to the membrane tubules and inhibits self-assembly-stimulated GTPase activity on the membrane. Interacts with GABARAP, GABARAPL1 and GABARAPL2. Interacts with MAP1LC3B (the lipidate and non-lipidated LC3 form); this interaction mediates recycling endosome scission leading to autophagosome release. Interacts with ITSN1. Interacts (via C-terminal proline-rich domain (PRD)) with SH3BP4 (via SH3 domain); this interaction controls the GTPase activity and is prevented by EGFR-induced tyrosine phosphorylation of either DNM2 or SH3BP4. May interact with PIK3C3. May be a component of a complex composed of RAB5A (in GDP-bound form), DYN2 and PIK3C3. Interacts with SDC4; this interaction is markedly enhanced at focal ahesion site upon induction of focal adhesions and stress-fiber formation. Interacts with ACTN1. Interacts with CTTN; this interaction stimulates the intrinsic GTPase activity of DNM2 and stabilizes the association of DNM2 and actin filaments; in addition this interaction is stimulated by ligand binding to the receptor, leading to the recruitment of the DNM2-CTTN complex to the sequestered receptor-ligand complex to its internalization. Interacts with NOSTRIN (via SH3 domain); this interaction allows the recruitment of NOS3 to dynamin-positive structures. Interacts with TUBG1; this interaction may participate in centrosome cohesion. Phosphorylation at Ser-848 by GSK3-alpha relieves the inhibition of BIN1 and promotes endocytosis. Phosphorylation at Ser-764 by CDK1 is greatly increased upon mitotic entry. It regulates cytokinesis downstream of calcineurin, and does not affect clathrin-mediated endocytosis. Dephosphorylated by calcineurin/PP2 during cytokinesis in a Ca(2+)- and calmodulin-dependent manner. Phosphorylated on tyrosine residues by EGFR and after activation of SRC. In terms of tissue distribution, widely expressed. Expressed in skeletal muscle and the peripheral nerve.

It localises to the cytoplasm. The protein resides in the cytoskeleton. The protein localises to the cytoplasmic vesicle. It is found in the clathrin-coated vesicle. Its subcellular location is the cell projection. It localises to the uropodium. The protein resides in the endosome. The protein localises to the microtubule organizing center. It is found in the centrosome. Its subcellular location is the centriole. It localises to the recycling endosome. The protein resides in the phagocytic cup. The protein localises to the phagosome membrane. It is found in the podosome. Its subcellular location is the cell junction. It localises to the postsynaptic density. The protein resides in the synapse. The protein localises to the synaptosome. It is found in the midbody. Its subcellular location is the membrane. It localises to the clathrin-coated pit. It carries out the reaction GTP + H2O = GDP + phosphate + H(+). Catalyzes the hydrolysis of GTP and utilizes this energy to mediate vesicle scission at plasma membrane during endocytosis and filament remodeling at many actin structures during organization of the actin cytoskeleton. Plays an important role in vesicular trafficking processes, namely clathrin-mediated endocytosis (CME), exocytic and clathrin-coated vesicle from the trans-Golgi network, and PDGF stimulated macropinocytosis. During vesicular trafficking process, associates to the membrane, through lipid binding, and self-assembles into ring-like structure through oligomerization to form a helical polymer around the vesicle membrane and leading to vesicle scission. Plays a role in organization of the actin cytoskeleton by mediating arrangement of stress fibers and actin bundles in podocytes. During organization of the actin cytoskeleton, self-assembles into ring-like structure that directly bundles actin filaments to form typical membrane tubules decorated with dynamin spiral polymers. Self-assembly increases GTPase activity and the GTP hydrolysis causes the rapid depolymerization of dynamin spiral polymers, and results in dispersion of actin bundles. Remodels, through its interaction with CTTN, bundled actin filaments in a GTPase-dependent manner and plays a role in orchestrating the global actomyosin cytoskeleton. The interaction with CTTN stabilizes the interaction of DNM2 and actin filaments and stimulates the intrinsic GTPase activity that results in actin filament-barbed ends and increases the sensitivity of filaments in bundles to the actin depolymerizing factor, CFL1. Plays a role in the autophagy process, by participating in the formation of ATG9A vesicles destined for the autophagosomes through its interaction with SNX18, by mediating recycling endosome scission leading to autophagosome release through MAP1LC3B interaction. Also regulates maturation of apoptotic cell corpse-containing phagosomes by recruiting PIK3C3 to the phagosome membrane. Also plays a role in cytokinesis. May participate in centrosome cohesion through its interaction with TUBG1. Plays a role in the regulation of neuron morphology, axon growth and formation of neuronal growth cones. Involved in membrane tubulation. This is Dynamin-2 from Homo sapiens (Human).